Consider the following 601-residue polypeptide: Elongation factor 4 (601 aa).

The region spanning 8-189 is the tr-type G domain; the sequence is EQIRNFGIIA…LIVRKAPPPK (182 aa). Residue 20-25 participates in GTP binding; sequence DHGKST.

Belongs to the TRAFAC class translation factor GTPase superfamily. Classic translation factor GTPase family. LepA subfamily.

The protein resides in the cell membrane. It catalyses the reaction GTP + H2O = GDP + phosphate + H(+). Functionally, required for accurate and efficient protein synthesis under certain stress conditions. May act as a fidelity factor of the translation reaction, by catalyzing a one-codon backward translocation of tRNAs on improperly translocated ribosomes. Back-translocation proceeds from a post-translocation (POST) complex to a pre-translocation (PRE) complex, thus giving elongation factor G a second chance to translocate the tRNAs correctly. Binds to ribosomes in a GTP-dependent manner. The polypeptide is Elongation factor 4 (Tropheryma whipplei (strain TW08/27) (Whipple's bacillus)).